Here is a 346-residue protein sequence, read N- to C-terminus: Hydroxyproline O-galactosyltransferase HPGT3 (346 aa).

Polar residues predominate over residues Met1–Ser10. The tract at residues Met1–Phe21 is disordered. The Cytoplasmic segment spans residues Met1 to Pro28. Residues Ser29–Gly45 form a helical; Signal-anchor for type II membrane protein membrane-spanning segment. At Arg46–Ala346 the chain is on the lumenal side.

Belongs to the glycosyltransferase 31 family. Requires Mn(2+) as cofactor. In terms of tissue distribution, expressed in roots, rosette leaves, cauline leaves, stems, flowers and siliques.

It is found in the golgi apparatus membrane. Its pathway is protein modification; protein glycosylation. Functionally, possesses hydroxyproline O-galactosyltransferase activity. Transfers galactose from UDP-galactose to hydroxyproline residues in the arabinogalactan proteins (AGPs). Is specific for AGPs containing non-contiguous peptidyl hydroxyproline residues. The addition of galactose onto the peptidyl hydroxyproline residues in AGP core proteins represents the first committed step in arabinogalactan polysaccharide addition. AGP glycans play essential roles in both vegetative and reproductive plant growth. This chain is Hydroxyproline O-galactosyltransferase HPGT3, found in Arabidopsis thaliana (Mouse-ear cress).